Consider the following 345-residue polypeptide: NADPH-dependent oxidoreductase 2-alkenal reductase (345 aa).

NADP(+)-binding positions include 52–53 (PY), 163–169 (AASGAVG), G188, K192, Y208, N232, C254, Y260, 284–286 (FVV), F330, and 334–336 (NVG). Y53 contacts substrate. Residue Y260 participates in substrate binding.

It belongs to the NADP-dependent oxidoreductase L4BD family. Homodimer. As to expression, expressed in leaves.

Its subcellular location is the cytoplasm. It is found in the nucleus. It localises to the nucleoplasm. The enzyme catalyses an n-alkanal + NAD(+) = an alk-2-enal + NADH + H(+). It catalyses the reaction an n-alkanal + NADP(+) = an alk-2-enal + NADPH + H(+). Inhibited by N-ethylmaleimide and p-chloromercuribenzoic acid. Functionally, involved in the detoxification of reactive carbonyls. Acts on lipid peroxide-derived reactive aldehydes. Specific to a double bond activated by an adjacent carbonyl group. Can use both quinones and diamide as substrates, but not menadione, ferricyanide or phylloquinone. Can use 4-hydroxy-(2E)-nonenal (HNE), 4-hydroxy-(2E)-hexenal (HHE), (2E)-nonenal, (2E)-hexenal, (2E)-pentenal, propenal (acrolein), 3-buten-2-one and 3-penten-2-one, but not (R)-(-)-carvone, n-nonanal, n-hexanal, (3Z)-hexanal, cyclohex-2-en-1-one or 12-oxo phytodienoic acid (OPDA) as electron acceptors. Catalyzes the reduction of the alpha,beta-unsaturated bond of 2-alkenals, of lipid peroxide-derived oxenes 9-oxo-10(E),12(Z)-octadecadienoic acid (9-KODE) and 13-oxo-9(Z),11(E)-octadecadienoic acid (13-KODE), as well as 4-oxo-(2E)-nonenal and 4-hydroxynonenal. Can use 12-oxo-10(E) dodecanoate (traumatin), trans-1,3 diphenyl-2-propenone, trans-1,4-diphenyl-2-butene-1,4-dione, 9-oxo-12,13-epoxy-(10E)-octadecenoic acid (trans-EKODE-1b) and 9,13-dihydroxy-10-oxo-11-octadecenoic acid as substrates. Catalyzes the reduction of the 7-8 double bond of phenylpropanal substrates, such as p-coumaryl aldehyde and coniferyl aldehyde (in vitro). Has activity towards toxic substrates, such as 4-hydroxy-(2E)-nonenal (in vitro). May play a distinct role in plant antioxidant defense and is possibly involved in NAD(P)/NAD(P)H homeostasis. In Arabidopsis thaliana (Mouse-ear cress), this protein is NADPH-dependent oxidoreductase 2-alkenal reductase.